A 97-amino-acid chain; its full sequence is Co-chaperonin GroES (97 aa).

Belongs to the GroES chaperonin family. As to quaternary structure, heptamer of 7 subunits arranged in a ring. Interacts with the chaperonin GroEL.

It is found in the cytoplasm. Together with the chaperonin GroEL, plays an essential role in assisting protein folding. The GroEL-GroES system forms a nano-cage that allows encapsulation of the non-native substrate proteins and provides a physical environment optimized to promote and accelerate protein folding. GroES binds to the apical surface of the GroEL ring, thereby capping the opening of the GroEL channel. This is Co-chaperonin GroES from Pectobacterium carotovorum subsp. carotovorum (strain PC1).